A 168-amino-acid polypeptide reads, in one-letter code: S-ribosylhomocysteine lyase (168 aa).

Fe cation-binding residues include H54, H58, and C128.

It belongs to the LuxS family. Homodimer. It depends on Fe cation as a cofactor.

It carries out the reaction S-(5-deoxy-D-ribos-5-yl)-L-homocysteine = (S)-4,5-dihydroxypentane-2,3-dione + L-homocysteine. Involved in the synthesis of autoinducer 2 (AI-2) which is secreted by bacteria and is used to communicate both the cell density and the metabolic potential of the environment. The regulation of gene expression in response to changes in cell density is called quorum sensing. Catalyzes the transformation of S-ribosylhomocysteine (RHC) to homocysteine (HC) and 4,5-dihydroxy-2,3-pentadione (DPD). The protein is S-ribosylhomocysteine lyase of Actinobacillus succinogenes (strain ATCC 55618 / DSM 22257 / CCUG 43843 / 130Z).